Reading from the N-terminus, the 39-residue chain is Photosystem II reaction center protein J (39 aa).

Residues 9–29 (LWLVATVGGIAAITVLGIFIY) form a helical membrane-spanning segment.

Belongs to the PsbJ family. In terms of assembly, PSII is composed of 1 copy each of membrane proteins PsbA, PsbB, PsbC, PsbD, PsbE, PsbF, PsbH, PsbI, PsbJ, PsbK, PsbL, PsbM, PsbT, PsbX, PsbY, PsbZ, Psb30/Ycf12, at least 3 peripheral proteins of the oxygen-evolving complex and a large number of cofactors. It forms dimeric complexes.

The protein resides in the plastid. It localises to the chloroplast thylakoid membrane. Functionally, one of the components of the core complex of photosystem II (PSII). PSII is a light-driven water:plastoquinone oxidoreductase that uses light energy to abstract electrons from H(2)O, generating O(2) and a proton gradient subsequently used for ATP formation. It consists of a core antenna complex that captures photons, and an electron transfer chain that converts photonic excitation into a charge separation. The protein is Photosystem II reaction center protein J of Pyropia yezoensis (Susabi-nori).